We begin with the raw amino-acid sequence, 322 residues long: Extracellular metalloprotease AFUA_1G07730 (322 aa).

Residues 1–22 (MLPFNSCVYVLLIISLMSNCRA) form the signal peptide. N-linked (GlcNAc...) asparagine glycans are attached at residues Asn123 and Asn197. Zn(2+) is bound at residue His233. Glu234 is an active-site residue. His237 provides a ligand contact to Zn(2+). Residues Cys272 and Cys299 are joined by a disulfide bond.

Belongs to the peptidase M43B family.

The protein localises to the secreted. Secreted metalloproteinase that allows assimilation of proteinaceous substrates. Plays a pivotal role as a pathogenicity determinant during infections and contributes to the ability of the pathogen to persist within the mammalian host. This Aspergillus fumigatus (strain ATCC MYA-4609 / CBS 101355 / FGSC A1100 / Af293) (Neosartorya fumigata) protein is Extracellular metalloprotease AFUA_1G07730.